The following is a 190-amino-acid chain: Elongation factor P-like protein (190 aa).

It belongs to the elongation factor P family.

The chain is Elongation factor P-like protein from Shigella dysenteriae serotype 1 (strain Sd197).